A 476-amino-acid polypeptide reads, in one-letter code: Lactate utilization protein B (476 aa).

2 consecutive 4Fe-4S ferredoxin-type domains span residues 304-334 (GTEFQPVLQCIRCAACVNVCPVYRHIGGHSY) and 353-382 (YDDYKELPYASSLCAACTEACPVKIPLHEL). [4Fe-4S] cluster contacts are provided by Cys-313, Cys-316, Cys-319, Cys-323, Cys-366, Cys-369, and Cys-373. The interval 440-476 (KGPGPLKAWTESREFPAPSKERFRDWFQTRQKGGNPS) is disordered. Residues 449–466 (TESREFPAPSKERFRDWF) are compositionally biased toward basic and acidic residues. The span at 467–476 (QTRQKGGNPS) shows a compositional bias: polar residues.

Belongs to the LutB/YkgF family.

Its function is as follows. Is involved in L-lactate degradation and allows cells to grow with lactate as the sole carbon source. Has probably a role as an electron transporter during oxidation of L-lactate. The protein is Lactate utilization protein B of Geobacillus kaustophilus (strain HTA426).